The primary structure comprises 283 residues: MTQTQPVGTLRLTIDDQGPQGQSRAVEQFHQGALRVIRPHYLDDSGQVSYTIIAIGGGYLGGDVYEQQFTVKDNAKALITTQSATKIYRTPQGPVTQYTEINVGENAVLEYLADQTIAYRESTYHQFTKVTLHPTSTFVMSEQITPGWHPDGKHFAYDEMRLHTEITDSTTGRLVLLDNLLLRPDSREGSFGWTEQYTHSGQMIVMGEGVDKQLVAELNEQLAAHPDVYGAVNFLSAPGTLLRGFIARTLSNRTEELINLHEHIASLLRGRWRGQEPVNLRKY.

Residues 1 to 20 (MTQTQPVGTLRLTIDDQGPQ) form a disordered region.

This sequence belongs to the UreD family. As to quaternary structure, ureD, UreF and UreG form a complex that acts as a GTP-hydrolysis-dependent molecular chaperone, activating the urease apoprotein by helping to assemble the nickel containing metallocenter of UreC. The UreE protein probably delivers the nickel.

It localises to the cytoplasm. In terms of biological role, required for maturation of urease via the functional incorporation of the urease nickel metallocenter. The polypeptide is Urease accessory protein UreD (Corynebacterium glutamicum (strain R)).